The sequence spans 465 residues: Antithrombin-III (465 aa).

An N-terminal signal peptide occupies residues 1–32; the sequence is MYSPGAGSGAAGERKLCLLSLLLIGALGCAIC. 2 disulfides stabilise this stretch: Cys-41–Cys-161 and Cys-54–Cys-128. Thr-64 carries the post-translational modification Phosphothreonine. Residue Ser-69 is modified to Phosphoserine. Trp-82 provides a ligand contact to heparin. Asn-129 carries N-linked (GlcNAc...) asparagine glycosylation. A heparin-binding site is contributed by Arg-162. Asn-168 carries N-linked (GlcNAc...) asparagine glycosylation. Arg-178 contacts heparin. N-linked (GlcNAc...) asparagine glycans are attached at residues Asn-188 and Asn-225. Residues Cys-280 and Cys-463 are joined by a disulfide bond.

Belongs to the serpin family. As to quaternary structure, forms protease inhibiting heterodimer with TMPRSS7. Post-translationally, phosphorylated by FAM20C in the extracellular medium. As to expression, plasma.

It localises to the secreted. It is found in the extracellular space. Its function is as follows. Most important serine protease inhibitor in plasma that regulates the blood coagulation cascade. AT-III inhibits thrombin, matriptase-3/TMPRSS7, as well as factors IXa, Xa and XIa. Its inhibitory activity is greatly enhanced in the presence of heparin. This is Antithrombin-III (Serpinc1) from Mus musculus (Mouse).